The chain runs to 1412 residues: Erbin (1412 aa).

LRR repeat units follow at residues 23 to 44 (TVTT…IFTF), 47 to 68 (TLEE…LFNC), 70 to 91 (SLHK…IANL), 93 to 114 (NLRE…IKNC), 116 to 137 (VLTI…FSQL), 139 to 161 (NLTQ…GRLT), 162 to 183 (KLQI…MNRL), 185 to 206 (QLER…LEQL), 208 to 229 (GLKE…IGSL), 231 to 252 (QLTY…ISTC), 254 to 275 (NLQD…IGSL), 277 to 298 (NITT…IGGL), 300 to 321 (SVEE…IGQL), 323 to 344 (NLRT…IGSW), 346 to 367 (NITV…MGDM), 369 to 391 (KLKV…TKLQ), and 392 to 413 (QLTA…QKET). Residues Ser440 and Ser444 each carry the phosphoserine modification. Disordered regions lie at residues 464-489 (CDED…PYPD) and 506-542 (KDEE…TTTV). The segment covering 470–480 (EREAPPREGNL) has biased composition (basic and acidic residues). Tyr483 bears the Phosphotyrosine mark. Thr485 bears the Phosphothreonine mark. Residues 506–532 (KDEETNEDSGRDLKPHEDQQDINKDVG) are compositionally biased toward basic and acidic residues. Positions 533-542 (VKTSESTTTV) are enriched in low complexity. Ser569, Ser598, Ser602, Ser603, and Ser620 each carry phosphoserine. The interval 615 to 681 (PLIETSINQP…TDSSQDTSLC (67 aa)) is disordered. Residues 632–641 (NKKDDTKETD) are compositionally biased toward basic and acidic residues. The segment covering 650–662 (NSNQNNSNCSSPS) has biased composition (low complexity). Residues 663 to 681 (RMSDSVSLNTDSSQDTSLC) are compositionally biased toward polar residues. Position 715 is a phosphoserine (Ser715). Residues 803–867 (ETEHLENGNK…PQKSGPVGSV (65 aa)) form a disordered region. A compositionally biased stretch (polar residues) spans 817-835 (ESVNKVNGHSEETSQSPNR). Residues Ser852, Ser857, and Ser872 each carry the phosphoserine modification. Thr917 is subject to Phosphothreonine. The residue at position 920 (Tyr920) is a Phosphotyrosine. Ser931 is modified (phosphoserine). Tyr972 carries the post-translational modification Phosphotyrosine. Disordered stretches follow at residues 997-1021 (NPQI…NQSY) and 1075-1192 (QRQS…KSKV). A compositionally biased stretch (polar residues) spans 1075–1086 (QRQSSVSSTASV). Tyr1104 carries the post-translational modification Phosphotyrosine. The segment covering 1157–1171 (MSVSDFNYSRTSPSK) has biased composition (polar residues). 3 positions are modified to phosphoserine: Ser1158, Ser1179, and Ser1286. The PDZ domain maps to 1321 to 1410 (EIRVRVEKDP…TVELIIVREV (90 aa)).

The protein belongs to the LAP (LRR and PDZ) protein family. In terms of assembly, interacts with ERBB2, BPAG1 and ITGB4. May favor the localization of ERBB2, by restricting its presence to the basolateral membrane of epithelial cells. Also found to interact with ARVCF and delta catenin. Interacts (via C-terminus) with DST Isoform 3 (via N-terminus). Interacts with NOD2 (via CARD domain). In terms of tissue distribution, highly expressed in brain, heart, kidney, muscle and stomach, followed by liver, spleen and intestine.

It is found in the cell junction. The protein resides in the hemidesmosome. Its subcellular location is the nucleus membrane. It localises to the basolateral cell membrane. Its function is as follows. Acts as an adapter for the receptor ERBB2, in epithelia. By binding the unphosphorylated 'Tyr-1248' of receptor ERBB2, it may contribute to stabilize this unphosphorylated state. Inhibits NOD2-dependent NF-kappa-B signaling and pro-inflammatory cytokine secretion. The protein is Erbin of Homo sapiens (Human).